Reading from the N-terminus, the 757-residue chain is Glutathione biosynthesis bifunctional protein GshAB (757 aa).

The interval 1 to 337 (MKIQHIIHEN…LGKARLAEVA (337 aa)) is glutamate--cysteine ligase. Residues 494 to 753 (KKVLQKAGFN…LTQNVIKMLF (260 aa)) form the ATP-grasp domain. Residue 521–580 (ALFENRAVVIKPKSTNYGLGITIFQQGVQNREDFAKALEIAFREDKEVMVEDYLVGTEYR) participates in ATP binding. The Mg(2+) site is built by Asp-702, Glu-723, and Asn-725. Residues Asp-702, Glu-723, and Asn-725 each coordinate Mn(2+).

It in the N-terminal section; belongs to the glutamate--cysteine ligase type 1 family. Type 2 subfamily. As to quaternary structure, monomer. Mg(2+) serves as cofactor. Requires Mn(2+) as cofactor.

The catalysed reaction is L-cysteine + L-glutamate + ATP = gamma-L-glutamyl-L-cysteine + ADP + phosphate + H(+). The enzyme catalyses gamma-L-glutamyl-L-cysteine + glycine + ATP = glutathione + ADP + phosphate + H(+). It functions in the pathway sulfur metabolism; glutathione biosynthesis; glutathione from L-cysteine and L-glutamate: step 1/2. It participates in sulfur metabolism; glutathione biosynthesis; glutathione from L-cysteine and L-glutamate: step 2/2. In terms of biological role, synthesizes glutathione from L-glutamate and L-cysteine via gamma-L-glutamyl-L-cysteine. This Pasteurella multocida (strain Pm70) protein is Glutathione biosynthesis bifunctional protein GshAB.